The following is a 480-amino-acid chain: Protein DETOXIFICATION 15 (480 aa).

12 helical membrane passes run G36–V56, I69–M89, L118–G138, I143–L163, V180–L200, G208–V228, L255–V275, V294–G314, R326–I346, V360–F380, I396–L416, and W428–F448.

The protein belongs to the multi antimicrobial extrusion (MATE) (TC 2.A.66.1) family.

The protein localises to the membrane. The chain is Protein DETOXIFICATION 15 from Arabidopsis thaliana (Mouse-ear cress).